We begin with the raw amino-acid sequence, 250 residues long: 2,3-bisphosphoglycerate-dependent phosphoglycerate mutase (250 aa).

Substrate is bound by residues Arg-10 to Asn-17, Thr-23 to Gly-24, Arg-62, Glu-89 to Tyr-92, Lys-100, Arg-116 to Arg-117, and Gly-185 to Asn-186. His-11 acts as the Tele-phosphohistidine intermediate in catalysis. Glu-89 functions as the Proton donor/acceptor in the catalytic mechanism.

It belongs to the phosphoglycerate mutase family. BPG-dependent PGAM subfamily. Homodimer.

The enzyme catalyses (2R)-2-phosphoglycerate = (2R)-3-phosphoglycerate. It functions in the pathway carbohydrate degradation; glycolysis; pyruvate from D-glyceraldehyde 3-phosphate: step 3/5. In terms of biological role, catalyzes the interconversion of 2-phosphoglycerate and 3-phosphoglycerate. This Salmonella choleraesuis (strain SC-B67) protein is 2,3-bisphosphoglycerate-dependent phosphoglycerate mutase.